Reading from the N-terminus, the 177-residue chain is Ribosome maturation factor RimM (177 aa).

In terms of domain architecture, PRC barrel spans 96–177 (DNEFYWVDLI…KITVDWGLDY (82 aa)).

This sequence belongs to the RimM family. As to quaternary structure, binds ribosomal protein uS19.

It is found in the cytoplasm. In terms of biological role, an accessory protein needed during the final step in the assembly of 30S ribosomal subunit, possibly for assembly of the head region. Essential for efficient processing of 16S rRNA. May be needed both before and after RbfA during the maturation of 16S rRNA. It has affinity for free ribosomal 30S subunits but not for 70S ribosomes. This chain is Ribosome maturation factor RimM, found in Herminiimonas arsenicoxydans.